A 43-amino-acid chain; its full sequence is Protein PsbN (43 aa).

The chain crosses the membrane as a helical span at residues 5 to 27 (TIFSIFFSCLLIGLTGYSLYTSF).

Belongs to the PsbN family.

It is found in the plastid. The protein resides in the chloroplast thylakoid membrane. In terms of biological role, may play a role in photosystem I and II biogenesis. This Mesostigma viride (Green alga) protein is Protein PsbN.